The chain runs to 474 residues: Ubiquinol-cytochrome-c reductase complex core protein 2, mitochondrial (474 aa).

A mitochondrion-targeting transit peptide spans methionine 1 to arginine 42.

This sequence belongs to the peptidase M16 family. UQCRC2/QCR2 subfamily. As to quaternary structure, component of the ubiquinol-cytochrome c oxidoreductase (cytochrome b-c1 complex, complex III, CIII), a multisubunit enzyme composed of 3 respiratory subunits cytochrome b, cytochrome c1 and Rieske protein, 2 core protein subunits, and additional low-molecular weight protein subunits. The complex exists as an obligatory dimer and forms supercomplexes (SCs) in the inner mitochondrial membrane with cytochrome c oxidase (complex IV, CIV).

It localises to the mitochondrion inner membrane. Component of the ubiquinol-cytochrome c oxidoreductase, a multisubunit transmembrane complex that is part of the mitochondrial electron transport chain which drives oxidative phosphorylation. The respiratory chain contains 3 multisubunit complexes succinate dehydrogenase (complex II, CII), ubiquinol-cytochrome c oxidoreductase (cytochrome b-c1 complex, complex III, CIII) and cytochrome c oxidase (complex IV, CIV), that cooperate to transfer electrons derived from NADH and succinate to molecular oxygen, creating an electrochemical gradient over the inner membrane that drives transmembrane transport and the ATP synthase. The cytochrome b-c1 complex catalyzes electron transfer from ubiquinol to cytochrome c, linking this redox reaction to translocation of protons across the mitochondrial inner membrane, with protons being carried across the membrane as hydrogens on the quinol. In the process called Q cycle, 2 protons are consumed from the matrix, 4 protons are released into the intermembrane space and 2 electrons are passed to cytochrome c. The chain is Ubiquinol-cytochrome-c reductase complex core protein 2, mitochondrial from Euglena gracilis.